We begin with the raw amino-acid sequence, 129 residues long: Succinate dehydrogenase cytochrome b556 subunit (129 aa).

Topologically, residues 1-26 (MIRNVKKQRPVNLDLQTIRFPITAIA) are cytoplasmic. The chain crosses the membrane as a helical span at residues 27–52 (SILHRVSGVITFVAVGILLWLLGTSL). Over 53 to 68 (SSPEGFEQASAIMGSF) the chain is Periplasmic. A helical membrane pass occupies residues 69–89 (FVKFIMWGILTALAYHVVVGI). H84 contributes to the heme binding site. The Cytoplasmic segment spans residues 90 to 108 (RHMMMDFGYLEETFEAGKR). A helical membrane pass occupies residues 109 to 129 (SAKISFVITVVLSLLAGVLVW).

Belongs to the cytochrome b560 family. As to quaternary structure, part of an enzyme complex containing four subunits: a flavoprotein, an iron-sulfur protein, plus two membrane-anchoring proteins, SdhC and SdhD. The complex can form homotrimers. Requires heme as cofactor.

It is found in the cell inner membrane. It functions in the pathway carbohydrate metabolism; tricarboxylic acid cycle. Membrane-anchoring subunit of succinate dehydrogenase (SDH). This is Succinate dehydrogenase cytochrome b556 subunit (sdhC) from Escherichia coli O157:H7.